The sequence spans 369 residues: Aminomethyltransferase (369 aa).

This sequence belongs to the GcvT family. In terms of assembly, the glycine cleavage system is composed of four proteins: P, T, L and H.

It carries out the reaction N(6)-[(R)-S(8)-aminomethyldihydrolipoyl]-L-lysyl-[protein] + (6S)-5,6,7,8-tetrahydrofolate = N(6)-[(R)-dihydrolipoyl]-L-lysyl-[protein] + (6R)-5,10-methylene-5,6,7,8-tetrahydrofolate + NH4(+). The glycine cleavage system catalyzes the degradation of glycine. The sequence is that of Aminomethyltransferase from Rippkaea orientalis (strain PCC 8801 / RF-1) (Cyanothece sp. (strain PCC 8801)).